A 436-amino-acid chain; its full sequence is Small ribosomal subunit protein uS5m (436 aa).

The region spanning Phe-152–Val-218 is the S5 DRBM domain. The tract at residues Gly-417 to Asp-436 is disordered.

It belongs to the universal ribosomal protein uS5 family. Component of the mitochondrial ribosome small subunit (28S) which comprises a 12S rRNA and about 30 distinct proteins.

Its subcellular location is the mitochondrion. The polypeptide is Small ribosomal subunit protein uS5m (mrps-5) (Caenorhabditis elegans).